We begin with the raw amino-acid sequence, 192 residues long: uncharacterized protein (192 aa).

Its subcellular location is the virion. This is an uncharacterized protein from Acanthamoeba polyphaga mimivirus (APMV).